The primary structure comprises 238 residues: DNA repair protein RecO (238 aa).

This sequence belongs to the RecO family.

Its function is as follows. Involved in DNA repair and RecF pathway recombination. The protein is DNA repair protein RecO of Flavobacterium psychrophilum (strain ATCC 49511 / DSM 21280 / CIP 103535 / JIP02/86).